Consider the following 161-residue polypeptide: Cyclic pyranopterin monophosphate synthase (161 aa).

Residues 75 to 77 and 113 to 114 contribute to the substrate site; these read LCH and ME. Asp-128 is an active-site residue.

The protein belongs to the MoaC family. In terms of assembly, homohexamer; trimer of dimers.

It carries out the reaction (8S)-3',8-cyclo-7,8-dihydroguanosine 5'-triphosphate = cyclic pyranopterin phosphate + diphosphate. Its pathway is cofactor biosynthesis; molybdopterin biosynthesis. Its function is as follows. Catalyzes the conversion of (8S)-3',8-cyclo-7,8-dihydroguanosine 5'-triphosphate to cyclic pyranopterin monophosphate (cPMP). The polypeptide is Cyclic pyranopterin monophosphate synthase (Salmonella arizonae (strain ATCC BAA-731 / CDC346-86 / RSK2980)).